A 633-amino-acid chain; its full sequence is Probable potassium transport system protein Kup 2 (633 aa).

11 helical membrane passes run 59–79 (ISAILWALMVVVSLKYVILIM), 110–130 (ILLVGLFGAALFYGDAVLTPA), 145–165 (TALQPYVLPASVGVLIALFLF), 173–193 (IGALFGPVTIVWFLALAAAGI), 219–239 (GFASFAVLGAVLLAFTGAEAL), 256–276 (FGLVFPALALNYLGQGALIIV), 287–307 (LLYPSWALYPMVALATAATVI), 345–365 (IYIPTLNGMLLVAVLVAVLGF), 374–394 (AYGVAVTGTMLVTTLLTFFVI), 402–422 (LLLSLVATGFFIAVDMAFVSS), and 429–449 (EGGWFPLVVGAGIFVVMLTWV).

It belongs to the HAK/KUP transporter (TC 2.A.72) family.

It is found in the cell inner membrane. It catalyses the reaction K(+)(in) + H(+)(in) = K(+)(out) + H(+)(out). Transport of potassium into the cell. Likely operates as a K(+):H(+) symporter. The protein is Probable potassium transport system protein Kup 2 of Cupriavidus necator (strain ATCC 17699 / DSM 428 / KCTC 22496 / NCIMB 10442 / H16 / Stanier 337) (Ralstonia eutropha).